The primary structure comprises 472 residues: Deoxyribodipyrimidine photo-lyase (472 aa).

The Photolyase/cryptochrome alpha/beta domain occupies 2–134 (TTHLVWFRQD…VCEGFDDSVI (133 aa)). Positions 109 and 110 each coordinate (6R)-5,10-methylene-5,6,7,8-tetrahydrofolate. Y223 provides a ligand contact to FAD. R227 contacts DNA. FAD-binding positions include 235–239 (TSRLS), W272, and 275–282 (ELIWREFY). Interaction with DNA regions lie at residues 275–282 (ELIWREFY) and 342–343 (NR). 373–375 (DGD) serves as a coordination point for FAD. Q405 serves as a coordination point for DNA.

The protein belongs to the DNA photolyase class-1 family. In terms of assembly, monomer. It depends on FAD as a cofactor. The cofactor is (6R)-5,10-methylene-5,6,7,8-tetrahydrofolate.

It catalyses the reaction cyclobutadipyrimidine (in DNA) = 2 pyrimidine residues (in DNA).. Its function is as follows. Involved in repair of UV radiation-induced DNA damage. Catalyzes the light-dependent monomerization (300-600 nm) of cyclobutyl pyrimidine dimers (in cis-syn configuration), which are formed between adjacent bases on the same DNA strand upon exposure to ultraviolet radiation. The chain is Deoxyribodipyrimidine photo-lyase (phrB) from Escherichia coli (strain K12).